We begin with the raw amino-acid sequence, 363 residues long: Guanine nucleotide-binding protein alpha-11 subunit (363 aa).

In terms of domain architecture, G-alpha spans 26 to 363; sequence KMLKILLLGG…KISMEKVGFM (338 aa). Residues 29 to 42 are G1 motif; it reads KILLLGGPECGKST. GTP-binding positions include 34–41, 172–178, 197–201, 276–279, and alanine 335; these read GGPECGKS, LRARVPT, DVGGQ, and NKID. Residues serine 41 and threonine 178 each contribute to the Mg(2+) site. The tract at residues 170-178 is G2 motif; the sequence is DVLRARVPT. Positions 193–202 are G3 motif; it reads LRMVDVGGQR. Residues 272-279 are G4 motif; the sequence is ILFLNKID. The segment at 333-338 is G5 motif; that stretch reads TNATDT.

It belongs to the G-alpha family. As to quaternary structure, g proteins are composed of 3 units; alpha, beta and gamma. The alpha chain contains the guanine nucleotide binding site. In terms of tissue distribution, expressed in ADL and ASH neurons.

Its function is as follows. Guanine nucleotide-binding proteins (G proteins) are involved as modulators or transducers in various transmembrane signaling systems. Mediates the transduction of food and serotonin signals, which modulates the avoidance response to the odorant octanol. Has a role in lifespan to promote longevity. In Caenorhabditis elegans, this protein is Guanine nucleotide-binding protein alpha-11 subunit (gpa-11).